The chain runs to 99 residues: Large ribosomal subunit protein uL23 (99 aa).

Belongs to the universal ribosomal protein uL23 family. As to quaternary structure, part of the 50S ribosomal subunit. Contacts protein L29, and trigger factor when it is bound to the ribosome.

Its function is as follows. One of the early assembly proteins it binds 23S rRNA. One of the proteins that surrounds the polypeptide exit tunnel on the outside of the ribosome. Forms the main docking site for trigger factor binding to the ribosome. The protein is Large ribosomal subunit protein uL23 of Francisella philomiragia subsp. philomiragia (strain ATCC 25017 / CCUG 19701 / FSC 153 / O#319-036).